The primary structure comprises 178 residues: ATP synthase subunit delta (178 aa).

This sequence belongs to the ATPase delta chain family. In terms of assembly, F-type ATPases have 2 components, F(1) - the catalytic core - and F(0) - the membrane proton channel. F(1) has five subunits: alpha(3), beta(3), gamma(1), delta(1), epsilon(1). F(0) has three main subunits: a(1), b(2) and c(10-14). The alpha and beta chains form an alternating ring which encloses part of the gamma chain. F(1) is attached to F(0) by a central stalk formed by the gamma and epsilon chains, while a peripheral stalk is formed by the delta and b chains.

The protein localises to the cell inner membrane. F(1)F(0) ATP synthase produces ATP from ADP in the presence of a proton or sodium gradient. F-type ATPases consist of two structural domains, F(1) containing the extramembraneous catalytic core and F(0) containing the membrane proton channel, linked together by a central stalk and a peripheral stalk. During catalysis, ATP synthesis in the catalytic domain of F(1) is coupled via a rotary mechanism of the central stalk subunits to proton translocation. In terms of biological role, this protein is part of the stalk that links CF(0) to CF(1). It either transmits conformational changes from CF(0) to CF(1) or is implicated in proton conduction. This is ATP synthase subunit delta from Pelodictyon phaeoclathratiforme (strain DSM 5477 / BU-1).